The chain runs to 254 residues: Thiazole synthase (254 aa).

Catalysis depends on K96, which acts as the Schiff-base intermediate with DXP. Residues G157, 183–184 (AG), and 205–206 (NT) contribute to the 1-deoxy-D-xylulose 5-phosphate site.

This sequence belongs to the ThiG family. Homotetramer. Forms heterodimers with either ThiH or ThiS.

Its subcellular location is the cytoplasm. It catalyses the reaction [ThiS sulfur-carrier protein]-C-terminal-Gly-aminoethanethioate + 2-iminoacetate + 1-deoxy-D-xylulose 5-phosphate = [ThiS sulfur-carrier protein]-C-terminal Gly-Gly + 2-[(2R,5Z)-2-carboxy-4-methylthiazol-5(2H)-ylidene]ethyl phosphate + 2 H2O + H(+). Its pathway is cofactor biosynthesis; thiamine diphosphate biosynthesis. Functionally, catalyzes the rearrangement of 1-deoxy-D-xylulose 5-phosphate (DXP) to produce the thiazole phosphate moiety of thiamine. Sulfur is provided by the thiocarboxylate moiety of the carrier protein ThiS. In vitro, sulfur can be provided by H(2)S. The chain is Thiazole synthase from Clostridium perfringens (strain SM101 / Type A).